The chain runs to 1255 residues: Membrane-associated guanylate kinase, WW and PDZ domain-containing protein 1 (1255 aa).

Residues 17–105 (ECTVKRGPQG…AVTFKAVRQG (89 aa)) form the PDZ 1 domain. A Guanylate kinase-like domain is found at 96–287 (AVTFKAVRQG…APITDPSQKF (192 aa)). Residue 103-110 (RQGGRLNK) participates in ATP binding. 2 disordered regions span residues 208 to 227 (HSLQSGSKQSTPKRTKSYND) and 235 to 265 (HTENEEEEDVPEMNSSFTADSGDQDEPTLQE). The region spanning 300 to 333 (GPLPENWEMAYTENGEVYFIDHNAKTTSWLDPRC) is the WW 1 domain. The residue at position 357 (serine 357) is a Phosphoserine. Residues 359-392 (LELPAGWEKIEDPVYGVYYVDHINRKTQYENPVL) enclose the WW 2 domain. Residues 395–462 (KRKRQLEQQQ…QGKPFFTRNP (68 aa)) form a disordered region. Residues 402 to 414 (QQQQQQQHQQQPQ) show a composition bias toward low complexity. The span at 434–444 (PVAPSHPPSNP) shows a compositional bias: pro residues. The 83-residue stretch at 471–553 (HTKLRKSSRG…GASVDLELCR (83 aa)) folds into the PDZ 2 domain. The segment covering 585–601 (QETYDSPASHSSKTGKV) has biased composition (polar residues). Disordered regions lie at residues 585 to 622 (QETYDSPASHSSKTGKVSNMKDARPSSPADVASNSSHG) and 719 to 820 (QRGG…GERD). One can recognise a PDZ 3 domain in the interval 642–720 (TVHIVKGPMG…GSEVTLLVQR (79 aa)). Serine 729 and serine 740 each carry phosphoserine. Positions 741-755 (QNSSQHSVSSLRSLH) are enriched in low complexity. Serine 799 is modified (phosphoserine). Residues 840–922 (DIFLWRKETG…QGHVNLTVRR (83 aa)) form the PDZ 4 domain. Residues 932-984 (ENEVPSPASSHHSSNQPASLTEEKRTPQGSQNSLNTVSSGSGSTSGIGSGGGG) form a disordered region. 2 stretches are compositionally biased toward polar residues: residues 938 to 950 (PASSHHSSNQPAS) and 958 to 967 (PQGSQNSLNT). Over residues 974 to 984 (STSGIGSGGGG) the composition is skewed to gly residues. Positions 997-1093 (DVEIRRGENE…TVTLRIIPGD (97 aa)) constitute a PDZ 5 domain. A Phosphoserine modification is found at serine 1070. A compositionally biased stretch (polar residues) spans 1111-1129 (TTTHAPSQQGTQETRTTTK). Residues 1111–1142 (TTTHAPSQQGTQETRTTTKPKPDSQFEFKGPQ) are disordered. In terms of domain architecture, PDZ 6 spans 1151–1233 (TVELERGAKG…RVRLFLRRGD (83 aa)).

In terms of assembly, part of a complex composed of AMOTL2, MAGI1 and CDH5, within the complex AMOTL2 acts as a scaffold protein for the interaction of MAGI1 with CDH5. The complex is required for coupling actin fibers to cell junctions in endothelial cells. Interacts through its WW 2 domain with SYNPO and through its PDZ 5 domain with ACTN4. Interacts with cytoplasmic domain of ADGRB1. Interacts via its WW domains with DRPLA. Interacts with ESAM, LRP2 and CXADR. May interact with CTNNB1. Interacts through its PDZ 1 domain with NET1. Interacts with ASIC3 and AMOT. Interacts with FCHSD2. Interacts with IGSF5/JAM4 and through its PDZ 2 and 3 domains with NPHS1 forming a tripartite complex. Interacts with DDN. May interact (via PDZ domain) with RAPGEF2. Interacts with DLL1. Interacts with KCNJ10 and possibly with KCNJ10/KCNJ16 heterodimer; this interaction may facilitate KCNJ10/KCNJ16 potassium channel expression at the basolateral membrane in kidney tubular cells. Interacts with PRRG4 (via cytoplasmic domain).

It localises to the cell junction. The protein localises to the tight junction. It is found in the cytoplasm. Its subcellular location is the membrane. Its function is as follows. Plays a role in coupling actin fibers to cell junctions in endothelial cells, via its interaction with AMOTL2 and CDH5. May regulate acid-induced ASIC3 currents by modulating its expression at the cell surface. The polypeptide is Membrane-associated guanylate kinase, WW and PDZ domain-containing protein 1 (Magi1) (Rattus norvegicus (Rat)).